Consider the following 503-residue polypeptide: Protein O-glucosyltransferase 3 (503 aa).

A signal peptide spans 1–19 (MQALPLGLQLALLVAAGAG). The stretch at 19–129 (GARVSAPRSL…VAHSPYILKG (111 aa)) is one Filamin repeat. N-linked (GlcNAc...) asparagine glycosylation is found at Asn-56 and Asn-302. The Prevents secretion from ER motif lies at 500 to 503 (REEL).

This sequence belongs to the KDELC family.

It is found in the endoplasmic reticulum lumen. The catalysed reaction is L-seryl-[EGF-like domain protein] + UDP-alpha-D-glucose = 3-O-(beta-D-glucosyl)-L-seryl-[EGF-like domain protein] + UDP + H(+). It catalyses the reaction L-seryl-[EGF-like domain protein] + UDP-alpha-D-xylose = 3-O-(beta-D-xylosyl)-L-seryl-[EGF-like domain protein] + UDP + H(+). The protein operates within protein modification; protein glycosylation. In terms of biological role, protein glucosyltransferase that catalyzes the transfer of glucose from UDP-glucose to a serine residue within the consensus sequence peptide C-X-N-T-X-G-S-F-X-C. Can also catalyze the transfer of xylose from UDP-xylose but less efficiently. Specifically targets extracellular EGF repeats of proteins such as NOTCH1, NOTCH3, FBN1, FBN2 and LTBP1. May regulate the transport of NOTCH1 and NOTCH3 to the plasma membrane and thereby the Notch signaling pathway. This chain is Protein O-glucosyltransferase 3 (Poglut3), found in Mus musculus (Mouse).